The chain runs to 756 residues: Polyribonucleotide nucleotidyltransferase (756 aa).

Asp492 and Asp498 together coordinate Mg(2+). Residues Pro559 to Val618 form the KH domain. The 75-residue stretch at Gly628–Gln702 folds into the S1 motif domain. The tract at residues Gly703–Arg756 is disordered. Basic and acidic residues predominate over residues Pro718–Arg756.

This sequence belongs to the polyribonucleotide nucleotidyltransferase family. Mg(2+) serves as cofactor.

Its subcellular location is the cytoplasm. It carries out the reaction RNA(n+1) + phosphate = RNA(n) + a ribonucleoside 5'-diphosphate. Functionally, involved in mRNA degradation. Catalyzes the phosphorolysis of single-stranded polyribonucleotides processively in the 3'- to 5'-direction. The chain is Polyribonucleotide nucleotidyltransferase from Nitratidesulfovibrio vulgaris (strain DSM 19637 / Miyazaki F) (Desulfovibrio vulgaris).